A 320-amino-acid polypeptide reads, in one-letter code: Polycomb complex protein BMI-1-A (320 aa).

The segment at 18–57 adopts an RING-type zinc-finger fold; the sequence is CVLCGGYFIDATTIIECLHSFCKMCIVRYLETSKYCPICD. The Nuclear localization signal motif lies at 81–95; it reads KLVPGLFKNEMKRRR. The interval 234–320 is disordered; sequence ITHPQEGLNN…ALNGSSTSSG (87 aa). The span at 262–281 shows a compositional bias: low complexity; sequence VPSTSSPLPSPSTLVQPSQP. Residues 285 to 304 are compositionally biased toward polar residues; sequence HISSPINGTTMTSPNRQFNF.

Component of a PRC1-like complex. Homodimer. Interacts with cbx2.

Its subcellular location is the nucleus. Its function is as follows. Component of a Polycomb group (PcG) multiprotein PRC1-like complex, a complex class required to maintain the transcriptionally repressive state of many genes, including Hox genes, throughout development. PcG PRC1 complex acts via chromatin remodeling and modification of histones; it mediates monoubiquitination of histone H2A 'Lys-119', rendering chromatin heritably changed in its expressibility. In the PRC1 complex, it is required to stimulate the E3 ubiquitin-protein ligase activity of rnf2. This is Polycomb complex protein BMI-1-A (bmi1a) from Danio rerio (Zebrafish).